Consider the following 893-residue polypeptide: Translation initiation factor IF-2 (893 aa).

Residues 49–303 (LNREAGSGPD…KGSSLQQGFQ (255 aa)) are disordered. Residues 68 to 82 (STLNIPGTGGKSKSV) are compositionally biased toward polar residues. Basic and acidic residues-rich tracts occupy residues 93 to 159 (VKRD…KDKV) and 166 to 216 (DMTK…EENK). Positions 254 to 269 (GRGRNAKAARPAKKGN) are enriched in basic residues. The span at 270–283 (KHAESKADREEARA) shows a compositional bias: basic and acidic residues. The tr-type G domain maps to 392-561 (PRAPVVTIMG…LLQAEVLELK (170 aa)). The tract at residues 401-408 (GHVDHGKT) is G1. Position 401-408 (401-408 (GHVDHGKT)) interacts with GTP. The tract at residues 426-430 (GITQH) is G2. Residues 447-450 (DTPG) are G3. Residues 447-451 (DTPGH) and 501-504 (NKID) contribute to the GTP site. Positions 501-504 (NKID) are G4. Residues 537–539 (SAK) form a G5 region.

It belongs to the TRAFAC class translation factor GTPase superfamily. Classic translation factor GTPase family. IF-2 subfamily.

The protein localises to the cytoplasm. In terms of biological role, one of the essential components for the initiation of protein synthesis. Protects formylmethionyl-tRNA from spontaneous hydrolysis and promotes its binding to the 30S ribosomal subunits. Also involved in the hydrolysis of GTP during the formation of the 70S ribosomal complex. This chain is Translation initiation factor IF-2, found in Salmonella arizonae (strain ATCC BAA-731 / CDC346-86 / RSK2980).